The sequence spans 315 residues: Homoserine kinase (315 aa).

ATP is bound at residue 97–107 (PPARGLGSSAT).

The protein belongs to the GHMP kinase family. Homoserine kinase subfamily.

The protein localises to the cytoplasm. It catalyses the reaction L-homoserine + ATP = O-phospho-L-homoserine + ADP + H(+). The protein operates within amino-acid biosynthesis; L-threonine biosynthesis; L-threonine from L-aspartate: step 4/5. Functionally, catalyzes the ATP-dependent phosphorylation of L-homoserine to L-homoserine phosphate. The sequence is that of Homoserine kinase from Synechococcus sp. (strain CC9311).